The chain runs to 754 residues: Neprilysin-1 (754 aa).

Residues 5 to 27 form a helical; Signal-anchor for type II membrane protein membrane-spanning segment; sequence FGPPIVFLISCYALILCGTVDAL. 7 N-linked (GlcNAc...) asparagine glycosylation sites follow: N38, N81, N132, N217, N273, N303, and N441. Positions 63-754 constitute a Peptidase M13 domain; sequence VGDSEGYQEA…MNPTKRCVVW (692 aa). 4 disulfide bridges follow: C87–C739, C95–C699, C151–C414, and C624–C751. Position 587 (H587) interacts with Zn(2+). The active site involves E588. Zn(2+) is bound at residue H591. A glycan (N-linked (GlcNAc...) asparagine) is linked at N612. A Zn(2+)-binding site is contributed by E649. Residue D653 is the Proton donor of the active site.

Belongs to the peptidase M13 family. The cofactor is Zn(2+). Specifically expressed in pharyngeal cells and a single head neuron.

Its subcellular location is the membrane. Probable cell surface protease. Required to control the neuronal innervation of pharyngeal pumping. The protein is Neprilysin-1 (nep-1) of Caenorhabditis elegans.